Consider the following 250-residue polypeptide: Small ribosomal subunit protein uS2 (250 aa).

The protein belongs to the universal ribosomal protein uS2 family.

The chain is Small ribosomal subunit protein uS2 from Marinobacter nauticus (strain ATCC 700491 / DSM 11845 / VT8) (Marinobacter aquaeolei).